We begin with the raw amino-acid sequence, 75 residues long: MGSFSIWHWLVVLAIVLLVFGTKRLTSGAKDLGSAVKEFKKGMRDEDKPNAQLGDESRSQDASRTAQDEHDRTPR.

A helical transmembrane segment spans residues 1-21 (MGSFSIWHWLVVLAIVLLVFG). The segment at 40 to 75 (KKGMRDEDKPNAQLGDESRSQDASRTAQDEHDRTPR) is disordered.

This sequence belongs to the TatA/E family. In terms of assembly, the Tat system comprises two distinct complexes: a TatABC complex, containing multiple copies of TatA, TatB and TatC subunits, and a separate TatA complex, containing only TatA subunits. Substrates initially bind to the TatABC complex, which probably triggers association of the separate TatA complex to form the active translocon.

The protein resides in the cell inner membrane. Part of the twin-arginine translocation (Tat) system that transports large folded proteins containing a characteristic twin-arginine motif in their signal peptide across membranes. TatA could form the protein-conducting channel of the Tat system. The sequence is that of Sec-independent protein translocase protein TatA from Stenotrophomonas maltophilia (strain R551-3).